Reading from the N-terminus, the 681-residue chain is Leucine-rich repeat, immunoglobulin-like domain and transmembrane domain-containing protein 3 (681 aa).

A signal peptide spans 1-19 (MWLSACLCLVLSFLGGVNG). The N-linked (GlcNAc...) asparagine glycan is linked to N18. The Lumenal portion of the chain corresponds to 20 to 584 (TCPSQCSCEY…RVEGRGSQWS (565 aa)). 5 LRR repeats span residues 56–79 (PVDT…AFYY), 80–103 (LVEL…SFYN), 104–128 (LRQL…LLDM), 129–151 (PHLR…AVRY), and 152–175 (LRNL…FLDS). The region spanning 254 to 344 (PSVMMSATKI…GISEAVVTVT (91 aa)) is the Ig-like domain. Residues C275 and C328 are joined by a disulfide bond. An N-linked (GlcNAc...) asparagine glycan is attached at N296. 2 disordered regions span residues 350–391 (TTTL…GLTS) and 425–464 (TSVQ…KFPP). Residues 378–391 (TPPSKSWLSPGLTS) show a composition bias toward polar residues. N-linked (GlcNAc...) asparagine glycosylation is found at N485 and N506. The chain crosses the membrane as a helical span at residues 585–605 (LLLVVTSTACVIVVPLICFLL). The Cytoplasmic portion of the chain corresponds to 606-681 (YKVCKLQCTS…SDGCRTEYYG (76 aa)).

As to expression, detected in the outer plexiform layer (OPL) of the retina, where it localizes to rod and cone ON-bipolar cells (at protein level). Also detected in bipolar cell bodies in the inner retinal layer (INL) (at protein level).

The protein localises to the cell projection. The protein resides in the dendrite. Its subcellular location is the perikaryon. It is found in the endoplasmic reticulum membrane. Functionally, plays a role in the synapse formation and synaptic transmission between cone photoreceptor cells and retinal bipolar cells. Required for normal transmission of a light-evoked stimulus from the cone photoreceptor cells to the ON-bipolar cells and ON-ganglion cells in the inner retina. Required in retinal ON-bipolar cells for normal localization of the cation channel TRPM1 at dendrite tips. Seems to play a specific role in synaptic contacts made by ON-bipolar cells with cone photoreceptor pedicles. May also have a role in cone synapse formation. Might facilitate FGFR1 exit from the endoplasmic reticulum to the Golgi. Could be a regulator of the FGFRs. This chain is Leucine-rich repeat, immunoglobulin-like domain and transmembrane domain-containing protein 3, found in Mus musculus (Mouse).